The chain runs to 463 residues: NADH dehydrogenase [ubiquinone] iron-sulfur protein 2, mitochondrial (463 aa).

The N-terminal 33 residues, 1 to 33 (MAALRALRCLRGVGAPVLRPGSGIRLPSQPSRG), are a transit peptide targeting the mitochondrion. Lys-62 bears the N6-acetyllysine mark. Arg-118 is modified (symmetric dimethylarginine). Cys-326, Cys-332, and Cys-347 together coordinate [4Fe-4S] cluster.

The protein belongs to the complex I 49 kDa subunit family. Core subunit of respiratory chain NADH dehydrogenase (Complex I) which is composed of 45 different subunits. Component of the iron-sulfur (IP) fragment of the enzyme. Interacts with NDUFAF3. Interacts with NDUFAF7. Interacts with CERS2. [4Fe-4S] cluster is required as a cofactor. Post-translationally, dimethylation at Arg-118 by NDUFAF7 takes place after NDUFS2 assembles into the complex I, leading to stabilize the early intermediate complex.

Its subcellular location is the mitochondrion inner membrane. It catalyses the reaction a ubiquinone + NADH + 5 H(+)(in) = a ubiquinol + NAD(+) + 4 H(+)(out). In terms of biological role, core subunit of the mitochondrial membrane respiratory chain NADH dehydrogenase (Complex I) which catalyzes electron transfer from NADH through the respiratory chain, using ubiquinone as an electron acceptor. Essential for the catalytic activity and assembly of complex I. Redox-sensitive, critical component of the oxygen-sensing pathway in the pulmonary vasculature which plays a key role in acute pulmonary oxygen-sensing and hypoxic pulmonary vasoconstriction. Plays an important role in carotid body sensing of hypoxia. Essential for glia-like neural stem and progenitor cell proliferation, differentiation and subsequent oligodendrocyte or neuronal maturation. The chain is NADH dehydrogenase [ubiquinone] iron-sulfur protein 2, mitochondrial (Ndufs2) from Mus musculus (Mouse).